The primary structure comprises 1158 residues: Voltage-gated inwardly rectifying potassium channel KCNH2 (1158 aa).

The Cytoplasmic portion of the chain corresponds to 1–402 (MPVRRGHVAP…RIHRWTILHY (402 aa)). Residues 17 to 88 (TIIRKFEGQS…AAQIAQALLG (72 aa)) enclose the PAS domain. In terms of domain architecture, PAC spans 92-144 (RKVEIAFYRKDGSCFLCLVDVVPVKNEDGAVIMFILNFEVVMEKDMVGSPTHD). The disordered stretch occupies residues 232–314 (RALVGSSSPP…GAMHPLRGGL (83 aa)). Phosphoserine is present on serine 239. Polar residues predominate over residues 258–269 (PDASGSSCSLAR). A phosphoserine mark is found at serine 283, serine 284, serine 319, and serine 350. Residues 403–423 (SPFKAVWDWLILLLVIYTAVF) form a helical membrane-spanning segment. Topologically, residues 424–449 (TPYSAAFLLKETEEGPPAPDCGYACQ) are extracellular. A helical transmembrane segment spans residues 450-470 (PLAVVDFIVDIMFIVDILINF). Over 471 to 494 (RTTYVNANEEVVSHPGRIAVHYFK) the chain is Cytoplasmic. Residues 495 to 515 (GWFLIDMVAAIPFDLLIFGSG) traverse the membrane as a helical segment. Residues 516–519 (SEEL) lie on the Extracellular side of the membrane. A helical; Voltage-sensor transmembrane segment spans residues 520-540 (IGLLKTARLLRLVRVARKLDR). The Cytoplasmic segment spans residues 541 to 546 (YSEYGA). A helical membrane pass occupies residues 547 to 567 (AVLFLLMCTFALIAHWLACIW). Over 568-610 (YAIGNMEQPHMDSRIGWLHNLGDQIGKPYNSSGLGGPSIKDKY) the chain is Extracellular. Asparagine 597 carries an N-linked (GlcNAc...) asparagine glycan. Positions 611–631 (VTALYFTFSSLTSVGFGNVSP) form an intramembrane region, pore-forming. The Selectivity filter signature appears at 623–628 (SVGFGN). The Extracellular segment spans residues 632-637 (NTNSEK). Residues 638–658 (IFSICVMLIGSLMYASIFGNV) traverse the membrane as a helical segment. The Cytoplasmic segment spans residues 659-1158 (SAIIQRLYSG…LHRHGSDPGS (500 aa)). Residues 741–841 (PFRGATKGCL…IHRDDLLEVL (101 aa)) are cNMP-binding domain. A disordered region spans residues 869-987 (GSPGSAELEG…KSSDTCNPLS (119 aa)). 2 positions are modified to phosphoserine: serine 870 and serine 873. Residues 882–891 (RQRKRKLSFR) are compositionally biased toward basic residues. Positions 910–926 (GRAGAGPSGRGRPGGPW) are enriched in gly residues. Residues 927–938 (GESPSSGPSSPE) show a composition bias toward low complexity. Over residues 959 to 969 (SPRPPGEPPGG) the composition is skewed to pro residues. Arginine 1013 is subject to Omega-N-methylarginine. Residues 1034-1061 (RGDVEGRLDALQRQLNRLETRLSADMAT) adopt a coiled-coil conformation. A disordered region spans residues 1116–1158 (FEELPPGAPELPQDGPPRRLSLPGQLGALTSQPLHRHGSDPGS). Serine 1136 carries the phosphoserine modification.

This sequence belongs to the potassium channel family. H (Eag) (TC 1.A.1.20) subfamily. Kv11.1/KCNH2 sub-subfamily. The potassium channel is probably composed of a homo- or heterotetrameric complex of pore-forming alpha subunits that can associate with modulating beta subunits. Interacts with DNAJB12 and DNAJB14; chaperones DNAJB12 and DNAJB14 promote tetramerization. Heteromultimer with KCNH6/ERG2 and KCNH7/ERG3. Interacts with ALG10B. Forms a stable complex with KCNE1 or KCNE2, and that this heteromultimerization regulates Inward rectifier potassium channel activity. Interacts with CANX. The core-glycosylated, but not the fully glycosylated form interacts with RNF207. Interacts with NDFIP1 and NDFIP2; this interaction decreases the cell membrane expression by targeting KCNH2, through interaction with NEDD4L, for the degradation through the multivesicular bodies (MVBs)-lysosomal pathway. Phosphorylated on serine and threonine residues. Phosphorylation by PKA inhibits ion conduction. In terms of tissue distribution, highly expressed in left and right atria of the heart, in cortex and hippocampus; detected at intermediate levels in left and right ventricle, Purkinje fibers, cerebellum, thalamus and basal ganglia; detected at low levels in liver, spleen and kidney.

Its subcellular location is the cell membrane. The enzyme catalyses K(+)(in) = K(+)(out). Functionally, pore-forming (alpha) subunit of voltage-gated inwardly rectifying potassium channel. Characterized by unusual gating kinetics by producing relatively small outward currents during membrane depolarization and large inward currents during subsequent repolarization which reflect a rapid inactivation during depolarization and quick recovery from inactivation but slow deactivation (closing) during repolarization. Channel properties are modulated by cAMP and subunit assembly. Forms a stable complex with KCNE1 or KCNE2, and that this heteromultimerization regulates inward rectifier potassium channel activity. In Canis lupus familiaris (Dog), this protein is Voltage-gated inwardly rectifying potassium channel KCNH2.